Consider the following 354-residue polypeptide: Cysteine proteinase A (354 aa).

Positions 1 to 24 (MARRNPLLFAIVVTILFVVCYGSA) are cleaved as a signal peptide. A propeptide spans 25–125 (LIAQTPPPVD…HKEDVHVDDS (101 aa)) (activation peptide). 3 disulfide bridges follow: Cys150-Cys191, Cys184-Cys229, and Cys282-Cys330. Cys153 is an active-site residue. N-linked (GlcNAc...) asparagine glycosylation is present at Asn208. Catalysis depends on residues His289 and Asn309.

Belongs to the peptidase C1 family.

This is Cysteine proteinase A (LMCPA) from Leishmania mexicana.